A 431-amino-acid chain; its full sequence is Divergent protein kinase domain 1B (431 aa).

The Cytoplasmic portion of the chain corresponds to 1-30; sequence MRKLRRLVHMVLFCPISKGLQSRLPGIKVK. Residues 5 to 6 carry the May mediate ER retention motif; it reads RR. Residues 31 to 51 traverse the membrane as a helical segment; that stretch reads YLFLAWLSVFVGSWVVYMHYS. Residues 52–431 lie on the Lumenal side of the membrane; sequence SYSELCRGHV…WKKISNTKYS (380 aa). Cystine bridges form between cysteine 57–cysteine 94 and cysteine 62–cysteine 117.

It belongs to the DIPK family. Post-translationally, among the many cysteines in the lumenal domain, most are probably involved in disulfide bonds.

It is found in the endoplasmic reticulum membrane. The protein is Divergent protein kinase domain 1B (dipk1b) of Xenopus tropicalis (Western clawed frog).